The following is a 296-amino-acid chain: Phosphatidylglycerol--prolipoprotein diacylglyceryl transferase (296 aa).

4 helical membrane-spanning segments follow: residues 10–30 (IAFSLGPVQVHWYGLMYLAAF), 57–77 (LLFYGMLGVVLGGRIGYMLFY), 92–112 (VWEGGMSFHGGLLGVLIACGL), and 119–139 (LHFFDVMDFVAPLVPLGLGFG). A 1,2-diacyl-sn-glycero-3-phospho-(1'-sn-glycerol) is bound at residue Arg-140. Helical transmembrane passes span 194-214 (QLYEAALEGVVMFVVLWTFSM), 220-240 (YAVSGLFALLYGVFRFIVEFV), and 255-275 (LTMGQILSLPLIGVGLVLLAL).

This sequence belongs to the Lgt family.

It localises to the cell inner membrane. The enzyme catalyses L-cysteinyl-[prolipoprotein] + a 1,2-diacyl-sn-glycero-3-phospho-(1'-sn-glycerol) = an S-1,2-diacyl-sn-glyceryl-L-cysteinyl-[prolipoprotein] + sn-glycerol 1-phosphate + H(+). The protein operates within protein modification; lipoprotein biosynthesis (diacylglyceryl transfer). Functionally, catalyzes the transfer of the diacylglyceryl group from phosphatidylglycerol to the sulfhydryl group of the N-terminal cysteine of a prolipoprotein, the first step in the formation of mature lipoproteins. The protein is Phosphatidylglycerol--prolipoprotein diacylglyceryl transferase of Xanthomonas campestris pv. campestris (strain 8004).